Consider the following 261-residue polypeptide: MVKVIVAGYKGRMGSTAAQMVIDNPDFELVGVYDARSEEQNLGEDDRFKGQNVPAFHDLDQIKTDATVWIDFTIPTAVYENAKFALNHGISPVIGTTGMTDEQVAELQKLAKDKQVGGLIAPNFGISAVLLMQFAQQAAKYFPDVEIIEMHHDDKIDSPSGTAISTAKKIAEVRQPKEQGNPDATETLPGARGAEYEGMRIHAVRLPGLVAHEEVMFGGPGEGLTIRQDSFDRISFMTGVKVAVEKVNQYHELFVGLEHLL.

8-13 contributes to the NAD(+) binding site; it reads GYKGRM. Arg36 lines the NADP(+) pocket. NAD(+) is bound by residues 95-97 and 121-124; these read GTT and APNF. The Proton donor/acceptor role is filled by His151. His152 lines the (S)-2,3,4,5-tetrahydrodipicolinate pocket. Catalysis depends on Lys155, which acts as the Proton donor. Residue 161 to 162 participates in (S)-2,3,4,5-tetrahydrodipicolinate binding; that stretch reads GT.

Belongs to the DapB family.

The protein resides in the cytoplasm. It catalyses the reaction (S)-2,3,4,5-tetrahydrodipicolinate + NAD(+) + H2O = (2S,4S)-4-hydroxy-2,3,4,5-tetrahydrodipicolinate + NADH + H(+). It carries out the reaction (S)-2,3,4,5-tetrahydrodipicolinate + NADP(+) + H2O = (2S,4S)-4-hydroxy-2,3,4,5-tetrahydrodipicolinate + NADPH + H(+). The protein operates within amino-acid biosynthesis; L-lysine biosynthesis via DAP pathway; (S)-tetrahydrodipicolinate from L-aspartate: step 4/4. Functionally, catalyzes the conversion of 4-hydroxy-tetrahydrodipicolinate (HTPA) to tetrahydrodipicolinate. The protein is 4-hydroxy-tetrahydrodipicolinate reductase of Lactiplantibacillus plantarum (strain ATCC BAA-793 / NCIMB 8826 / WCFS1) (Lactobacillus plantarum).